A 150-amino-acid polypeptide reads, in one-letter code: Ribosome maturation factor RimP (150 aa).

Belongs to the RimP family.

It localises to the cytoplasm. Its function is as follows. Required for maturation of 30S ribosomal subunits. In Thermotoga petrophila (strain ATCC BAA-488 / DSM 13995 / JCM 10881 / RKU-1), this protein is Ribosome maturation factor RimP.